Here is a 172-residue protein sequence, read N- to C-terminus: NADH-ubiquinone oxidoreductase chain 6 (172 aa).

A run of 5 helical transmembrane segments spans residues 1–21 (MTYF…AVAS), 27–47 (YGVV…LSLG), 48–68 (ISFV…VVFV), 87–107 (VVGY…VGGF), and 138–158 (CGVG…FVVL).

The protein belongs to the complex I subunit 6 family.

It localises to the mitochondrion membrane. It catalyses the reaction a ubiquinone + NADH + 5 H(+)(in) = a ubiquinol + NAD(+) + 4 H(+)(out). Its function is as follows. Core subunit of the mitochondrial membrane respiratory chain NADH dehydrogenase (Complex I) that is believed to belong to the minimal assembly required for catalysis. Complex I functions in the transfer of electrons from NADH to the respiratory chain. The immediate electron acceptor for the enzyme is believed to be ubiquinone. In Uria aalge (Common mure), this protein is NADH-ubiquinone oxidoreductase chain 6 (MT-ND6).